We begin with the raw amino-acid sequence, 308 residues long: Phosphoribosylaminoimidazole-succinocarboxamide synthase (308 aa).

It belongs to the SAICAR synthetase family.

The catalysed reaction is 5-amino-1-(5-phospho-D-ribosyl)imidazole-4-carboxylate + L-aspartate + ATP = (2S)-2-[5-amino-1-(5-phospho-beta-D-ribosyl)imidazole-4-carboxamido]succinate + ADP + phosphate + 2 H(+). It participates in purine metabolism; IMP biosynthesis via de novo pathway; 5-amino-1-(5-phospho-D-ribosyl)imidazole-4-carboxamide from 5-amino-1-(5-phospho-D-ribosyl)imidazole-4-carboxylate: step 1/2. In Xanthomonas euvesicatoria pv. vesicatoria (strain 85-10) (Xanthomonas campestris pv. vesicatoria), this protein is Phosphoribosylaminoimidazole-succinocarboxamide synthase.